Here is a 276-residue protein sequence, read N- to C-terminus: MSLWFLVFLSVLQGVTELFPVSSLGHTLLVPALFGMHIDKHAPQLLPFLVALHLGTAFALLWYFRERWIALIAGFFASLNGRKNDEGHLMWALIIGTIPAGLVGLLLEKRIERVFHDLRIVAVALIVNGILLWLGDRIQRARAHRPPEKLTFKQAFFVGLAQVGALIPGFSRSGLTMIAGNAAGLTAEKAAEFSFLLGTPIIFAAGLLELPKLFHAPDQLADALLGGVLTAIAAYLSVRFLMRYFEGRGRLASFGLYCALAGLFCLGWFMFHAQPV.

8 helical membrane-spanning segments follow: residues 1–21 (MSLW…LFPV), 44–64 (QLLP…LWYF), 87–107 (GHLM…GLLL), 114–134 (VFHD…LLWL), 150–170 (LTFK…IPGF), 190–210 (AAEF…LLEL), 222–242 (DALL…RFLM), and 251–271 (LASF…WFMF).

This sequence belongs to the UppP family.

The protein localises to the cell inner membrane. The enzyme catalyses di-trans,octa-cis-undecaprenyl diphosphate + H2O = di-trans,octa-cis-undecaprenyl phosphate + phosphate + H(+). Its function is as follows. Catalyzes the dephosphorylation of undecaprenyl diphosphate (UPP). Confers resistance to bacitracin. In Burkholderia thailandensis (strain ATCC 700388 / DSM 13276 / CCUG 48851 / CIP 106301 / E264), this protein is Undecaprenyl-diphosphatase 2.